We begin with the raw amino-acid sequence, 643 residues long: Threonine--tRNA ligase (643 aa).

The 61-residue stretch at 1-61 (MPIITLPDGS…SEDSSLEIIT (61 aa)) folds into the TGS domain. Positions 243–534 (DHRRIGKALD…ITEEYAGFFP (292 aa)) are catalytic. Positions 334, 385, and 511 each coordinate Zn(2+).

This sequence belongs to the class-II aminoacyl-tRNA synthetase family. Homodimer. Requires Zn(2+) as cofactor.

The protein localises to the cytoplasm. The catalysed reaction is tRNA(Thr) + L-threonine + ATP = L-threonyl-tRNA(Thr) + AMP + diphosphate + H(+). Its function is as follows. Catalyzes the attachment of threonine to tRNA(Thr) in a two-step reaction: L-threonine is first activated by ATP to form Thr-AMP and then transferred to the acceptor end of tRNA(Thr). Also edits incorrectly charged L-seryl-tRNA(Thr). The sequence is that of Threonine--tRNA ligase from Actinobacillus pleuropneumoniae serotype 7 (strain AP76).